The sequence spans 422 residues: BTB/POZ domain-containing protein KCTD18 (422 aa).

One can recognise a BTB domain in the interval 12 to 80; it reads DILRLNVGGC…YLHGEVHIPT (69 aa). Disordered regions lie at residues 289 to 357 and 376 to 422; these read VKNS…THLP and LRRT…DQTK. Positions 396 to 406 are enriched in pro residues; that stretch reads PAGPPEPPPDA. The span at 413 to 422 shows a compositional bias: polar residues; sequence WTENGQDQTK.

This chain is BTB/POZ domain-containing protein KCTD18 (KCTD18), found in Bos taurus (Bovine).